The sequence spans 273 residues: Putative expansin-B2 (273 aa).

Residues 1–29 (MTILVVDRYYMLMNLLFALTCLLLNLTHC) form the signal peptide. The N-linked (GlcNAc...) asparagine glycan is linked to Asn-36. An Expansin-like EG45 domain is found at 65-173 (GGACGYGNAV…KKVECNYIGK (109 aa)). 3 disulfide bridges follow: Cys-68–Cys-97, Cys-100–Cys-168, and Cys-105–Cys-111. In terms of domain architecture, Expansin-like CBD spans 186-269 (NSFAVLVAYV…NWQPGAIYKS (84 aa)).

This sequence belongs to the expansin family. Expansin B subfamily.

It localises to the secreted. Its subcellular location is the cell wall. It is found in the membrane. Functionally, may cause loosening and extension of plant cell walls by disrupting non-covalent bonding between cellulose microfibrils and matrix glucans. No enzymatic activity has been found. The polypeptide is Putative expansin-B2 (EXPB2) (Arabidopsis thaliana (Mouse-ear cress)).